The chain runs to 539 residues: Serine/threonine-protein kinase 35 (539 aa).

The interval 103-161 (ITIQGPAPPHLGARRRDEARGARAAPLLLPPPPAAMETGKENGARRGTKSPERKRRSPV) is disordered. Basic residues predominate over residues 148-160 (RGTKSPERKRRSP). The Protein kinase domain maps to 207–535 (YSLLAEIGRG…FELETRMDQV (329 aa)). ATP contacts are provided by residues 213 to 221 (IGRGSYGVV) and Lys-236. The Proton acceptor role is filled by Asp-365.

This sequence belongs to the protein kinase superfamily. Ser/Thr protein kinase family. In terms of assembly, interacts with PDLIM1/CLP-36. Post-translationally, autophosphorylated.

The protein resides in the nucleus. The protein localises to the nucleolus. It is found in the cytoplasm. It catalyses the reaction L-seryl-[protein] + ATP = O-phospho-L-seryl-[protein] + ADP + H(+). The enzyme catalyses L-threonyl-[protein] + ATP = O-phospho-L-threonyl-[protein] + ADP + H(+). This chain is Serine/threonine-protein kinase 35 (Stk35), found in Mus musculus (Mouse).